A 378-amino-acid polypeptide reads, in one-letter code: MSASDNNNSLEKNFAPLKNDRLLRALRFEPIDTTPVWMMRQAGRYLPEYKATRAEAGDFMSLCKDTARATEVTLQPLRRYDLDAAILFSDILTIPDAMGLGLYFEAGEGPKFKHPIRQQADLDRLPVLDVNDSLDYVMRAVTSIRTALNGQVPLFGFSGSPWTLATYMIEGGSSKDYRYTKGFLYSNPEFLHQLLDKLATSVIDYLDAQVVAGAQILQIFDSWGGALGHRQFVDFSHAYNKRIVAELKVRHPEIPVVLFTKGGGLWLDIQADSEADALGLDWTMPIDRARQVLTESQRQLTKQHKKLHSSKAIQGNLDPATLYGSPATIRAEVNAMLDSAYANGEKTGYVANLGHGITQWVNPDNAKVFIDAVHDYKI.

Substrate contacts are provided by residues 40–44, D90, Y167, S222, and H355; that span reads RQAGR.

This sequence belongs to the uroporphyrinogen decarboxylase family. Homodimer.

The protein resides in the cytoplasm. It catalyses the reaction uroporphyrinogen III + 4 H(+) = coproporphyrinogen III + 4 CO2. It functions in the pathway porphyrin-containing compound metabolism; protoporphyrin-IX biosynthesis; coproporphyrinogen-III from 5-aminolevulinate: step 4/4. Its function is as follows. Catalyzes the decarboxylation of four acetate groups of uroporphyrinogen-III to yield coproporphyrinogen-III. This chain is Uroporphyrinogen decarboxylase, found in Psychrobacter arcticus (strain DSM 17307 / VKM B-2377 / 273-4).